The following is a 249-amino-acid chain: Metallo-beta-lactamase type 2 (249 aa).

An N-terminal signal peptide occupies residues 1–18 (MKTVFILISMLFPVAVMA). Zn(2+)-binding residues include His99, His101, Asp103, His162, and Cys181. Lys184 and Asn193 together coordinate substrate. His223 serves as a coordination point for Zn(2+).

It belongs to the metallo-beta-lactamase superfamily. Class-B beta-lactamase family. Monomer. Zn(2+) serves as cofactor.

The protein localises to the periplasm. The catalysed reaction is a beta-lactam + H2O = a substituted beta-amino acid. Its activity is regulated as follows. Competitively inhibited by 4-morpholineethanesulfonic acid (MES), SB236050 and biphenyl tetrazoles (BPTs). Also inhibited by chelating agents such as EDTA and 1,10-phenanthroline. CcrA is not susceptible to inactivation by the beta-lactamase-blocking agents clavulanic acid or tazobactam. Confers resistance to the different beta-lactams antibiotics (penicillin, cephalosporin and carbapenem) via the hydrolysis of the beta-lactam ring. This is Metallo-beta-lactamase type 2 from Bacteroides fragilis.